The following is a 460-amino-acid chain: Serine--tRNA ligase (460 aa).

Residue 242-244 (TAE) coordinates L-serine. ATP-binding positions include 273–275 (RRE) and Val-289. Residue Glu-296 participates in L-serine binding. Residue 369–372 (EVSS) coordinates ATP. Position 405 (Ser-405) interacts with L-serine.

Belongs to the class-II aminoacyl-tRNA synthetase family. Type-1 seryl-tRNA synthetase subfamily. Homodimer. The tRNA molecule binds across the dimer.

The protein resides in the cytoplasm. It catalyses the reaction tRNA(Ser) + L-serine + ATP = L-seryl-tRNA(Ser) + AMP + diphosphate + H(+). The catalysed reaction is tRNA(Sec) + L-serine + ATP = L-seryl-tRNA(Sec) + AMP + diphosphate + H(+). It participates in aminoacyl-tRNA biosynthesis; selenocysteinyl-tRNA(Sec) biosynthesis; L-seryl-tRNA(Sec) from L-serine and tRNA(Sec): step 1/1. Its function is as follows. Catalyzes the attachment of serine to tRNA(Ser). Is also able to aminoacylate tRNA(Sec) with serine, to form the misacylated tRNA L-seryl-tRNA(Sec), which will be further converted into selenocysteinyl-tRNA(Sec). This is Serine--tRNA ligase from Haloquadratum walsbyi (strain DSM 16790 / HBSQ001).